The primary structure comprises 658 residues: Carnitine O-palmitoyltransferase 2, mitochondrial (658 aa).

The transit peptide at 1–25 (MMPRLLFRAWPRCPSLVLGAPSRPL) directs the protein to the mitochondrion. The Mitochondrial matrix portion of the chain corresponds to 26 to 178 (SAVSGPDDYL…GLLEPEVFHL (153 aa)). N6-succinyllysine is present on residues Lys69 and Lys85. The segment at residues 179–208 (NPSKSDTDAFKRLIRFVPPSLSWYGAYLVN) is an intramembrane region (note=Mitochondrial inner membrane). Topologically, residues 209–658 (AYPLDMSQYF…DALEGKAIKT (450 aa)) are mitochondrial matrix. Lys239 carries the N6-acetyllysine; alternate modification. The residue at position 239 (Lys239) is an N6-succinyllysine; alternate. The residue at position 305 (Lys305) is an N6-acetyllysine. The Proton acceptor role is filled by His372. Lys424 and Lys439 each carry N6-succinyllysine. 452–464 (GKEFLKKKQLSPD) serves as a coordination point for CoA. The (R)-carnitine site is built by Tyr486, Ser488, and Thr499. 2 positions are modified to N6-acetyllysine; alternate: Lys510 and Lys544. Residues Lys510 and Lys544 each carry the N6-succinyllysine; alternate modification.

Belongs to the carnitine/choline acetyltransferase family.

It localises to the mitochondrion inner membrane. It catalyses the reaction (R)-carnitine + hexadecanoyl-CoA = O-hexadecanoyl-(R)-carnitine + CoA. It carries out the reaction octanoyl-CoA + (R)-carnitine = O-octanoyl-(R)-carnitine + CoA. The catalysed reaction is decanoyl-CoA + (R)-carnitine = O-decanoyl-(R)-carnitine + CoA. The enzyme catalyses dodecanoyl-CoA + (R)-carnitine = O-dodecanoyl-R-carnitine + CoA. It catalyses the reaction tetradecanoyl-CoA + (R)-carnitine = O-tetradecanoyl-(R)-carnitine + CoA. It carries out the reaction (R)-carnitine + octadecanoyl-CoA = O-octadecanoyl-(R)-carnitine + CoA. The catalysed reaction is eicosanoyl-CoA + (R)-carnitine = O-eicosanoyl-(R)-carnitine + CoA. The enzyme catalyses (9Z)-tetradecenoyl-CoA + (R)-carnitine = O-(9Z)-tetradecenoyl-(R)-carnitine + CoA. It catalyses the reaction (5Z)-tetradecenoyl-CoA + (R)-carnitine = O-(5Z)-tetradecenoyl-(R)-carnitine + CoA. It carries out the reaction (R)-carnitine + (9Z)-octadecenoyl-CoA = O-(9Z)-octadecenoyl-(R)-carnitine + CoA. The catalysed reaction is 4,8-dimethylnonanoyl-CoA + (R)-carnitine = O-4,8-dimethylnonanoyl-(R)-carnitine + CoA. It functions in the pathway lipid metabolism; fatty acid beta-oxidation. Involved in the intramitochondrial synthesis of acylcarnitines from accumulated acyl-CoA metabolites. Reconverts acylcarnitines back into the respective acyl-CoA esters that can then undergo beta-oxidation, an essential step for the mitochondrial uptake of long-chain fatty acids and their subsequent beta-oxidation in the mitochondrion. Active with medium (C8-C12) and long-chain (C14-C18) acyl-CoA esters. This Rattus norvegicus (Rat) protein is Carnitine O-palmitoyltransferase 2, mitochondrial.